The primary structure comprises 192 residues: Holliday junction branch migration complex subunit RuvA (192 aa).

The segment at 1-61 is domain I; sequence MFEYLKGIVA…DTGITLYGFL (61 aa). A domain II region spans residues 62-137; that stretch reads SLEDKELFLK…KLGDYVKKSA (76 aa). Residues 137–140 form a flexible linker region; the sequence is AVAT. The segment at 141 to 192 is domain III; it reads DLTPSLQDALLALVALGYTQKEVDRITPKLAKLPENTADGYIKEALALLLKK.

It belongs to the RuvA family. In terms of assembly, homotetramer. Forms an RuvA(8)-RuvB(12)-Holliday junction (HJ) complex. HJ DNA is sandwiched between 2 RuvA tetramers; dsDNA enters through RuvA and exits via RuvB. An RuvB hexamer assembles on each DNA strand where it exits the tetramer. Each RuvB hexamer is contacted by two RuvA subunits (via domain III) on 2 adjacent RuvB subunits; this complex drives branch migration. In the full resolvosome a probable DNA-RuvA(4)-RuvB(12)-RuvC(2) complex forms which resolves the HJ.

It is found in the cytoplasm. The RuvA-RuvB-RuvC complex processes Holliday junction (HJ) DNA during genetic recombination and DNA repair, while the RuvA-RuvB complex plays an important role in the rescue of blocked DNA replication forks via replication fork reversal (RFR). RuvA specifically binds to HJ cruciform DNA, conferring on it an open structure. The RuvB hexamer acts as an ATP-dependent pump, pulling dsDNA into and through the RuvAB complex. HJ branch migration allows RuvC to scan DNA until it finds its consensus sequence, where it cleaves and resolves the cruciform DNA. This is Holliday junction branch migration complex subunit RuvA from Lactobacillus gasseri (strain ATCC 33323 / DSM 20243 / BCRC 14619 / CIP 102991 / JCM 1131 / KCTC 3163 / NCIMB 11718 / NCTC 13722 / AM63).